Consider the following 2230-residue polypeptide: Golgin subfamily A member 4 (2230 aa).

Residues 1–64 (MFKKLKQKIS…SGDTQSFAQK (64 aa)) form a disordered region. At Ser10 the chain carries Phosphoserine. A compositionally biased stretch (low complexity) spans 12–41 (EQQQLQQALAPAQASSNSSTPTRMRSRTSS). At Thr39 the chain carries Phosphothreonine. Ser41, Ser71, Ser78, and Ser89 each carry phosphoserine. Over residues 87 to 107 (SSSKESLVRTSSRESLNRLDL) the composition is skewed to basic and acidic residues. Residues 87–127 (SSSKESLVRTSSRESLNRLDLDSSTASFDPPSDMDSEAEDL) form a disordered region. Positions 133–203 (SLNKEQLIQR…EELQMDQQAK (71 aa)) are interaction with MACF1. Positions 133–2185 (SLNKEQLIQR…EYLRKVLFEY (2053 aa)) form a coiled coil. Ser266 carries the phosphoserine modification. N-linked (GlcNAc...) asparagine glycans are attached at residues Asn585 and Asn1612. Positions 2168-2215 (LFGEPTEFEYLRKVLFEYMMGRETKTMAKVITTVLKFPDDQTQKILER) constitute a GRIP domain. Thr2223 is modified (phosphothreonine).

In terms of assembly, homodimer. Interacts with RAB6A. Interacts with GTP-bound ARL1 and ARL3. Interacts with MACF1. Directly interacts with TBC1D23. Interacts with FAM91A1; this interaction may be mediated by TBC1D23.

Its subcellular location is the cytoplasm. The protein resides in the golgi apparatus membrane. The protein localises to the golgi apparatus. It is found in the trans-Golgi network membrane. Functionally, involved in vesicular trafficking at the Golgi apparatus level. May play a role in delivery of transport vesicles containing GPI-linked proteins from the trans-Golgi network through its interaction with MACF1. Involved in endosome-to-Golgi trafficking. This Homo sapiens (Human) protein is Golgin subfamily A member 4 (GOLGA4).